Reading from the N-terminus, the 166-residue chain is uncharacterized protein (166 aa).

A disordered region spans residues 25–116 (PEEPPLWVPP…QGADEVHSQH (92 aa)). Serine 105 is modified (phosphoserine).

This is an uncharacterized protein from Rattus norvegicus (Rat).